Reading from the N-terminus, the 149-residue chain is Lipoprotein signal peptidase (149 aa).

Helical transmembrane passes span 53–73 and 89–109; these read MPGKSWLFFISALLVIMALVI and GLIAGGALGNLIDRYFYGFVI. Active-site residues include Asp-110 and Asp-124. A helical transmembrane segment spans residues 119–139; sequence VFNLADSAIVCGGILLLILVL.

It belongs to the peptidase A8 family.

The protein localises to the cell membrane. It catalyses the reaction Release of signal peptides from bacterial membrane prolipoproteins. Hydrolyzes -Xaa-Yaa-Zaa-|-(S,diacylglyceryl)Cys-, in which Xaa is hydrophobic (preferably Leu), and Yaa (Ala or Ser) and Zaa (Gly or Ala) have small, neutral side chains.. It participates in protein modification; lipoprotein biosynthesis (signal peptide cleavage). In terms of biological role, this protein specifically catalyzes the removal of signal peptides from prolipoproteins. The sequence is that of Lipoprotein signal peptidase from Syntrophomonas wolfei subsp. wolfei (strain DSM 2245B / Goettingen).